Reading from the N-terminus, the 314-residue chain is DNA-directed RNA polymerase subunit alpha (314 aa).

An alpha N-terminal domain (alpha-NTD) region spans residues 1–228 (MIEIEKPKIE…EHLNIFVGLT (228 aa)). The segment at 245-314 (KEKVLEMTIE…ELGLGLRKDD (70 aa)) is alpha C-terminal domain (alpha-CTD).

It belongs to the RNA polymerase alpha chain family. Homodimer. The RNAP catalytic core consists of 2 alpha, 1 beta, 1 beta' and 1 omega subunit. When a sigma factor is associated with the core the holoenzyme is formed, which can initiate transcription.

The catalysed reaction is RNA(n) + a ribonucleoside 5'-triphosphate = RNA(n+1) + diphosphate. In terms of biological role, DNA-dependent RNA polymerase catalyzes the transcription of DNA into RNA using the four ribonucleoside triphosphates as substrates. The chain is DNA-directed RNA polymerase subunit alpha from Bacillus licheniformis (strain ATCC 14580 / DSM 13 / JCM 2505 / CCUG 7422 / NBRC 12200 / NCIMB 9375 / NCTC 10341 / NRRL NRS-1264 / Gibson 46).